Consider the following 1701-residue polypeptide: Rho guanine nucleotide exchange factor TIAM2 (1701 aa).

Disordered regions lie at residues 1–21 (MGNSDSQYTLQGSKNHSNTIT), 201–250 (SPTL…SSWY), 265–293 (GSFLAPGMPDPSLHASFPPGDAKKPFNQS), and 389–417 (SLSRKKRKLQEPRSKEGSDYFDSRSDGLN). Gly2 carries N-myristoyl glycine lipidation. The span at 238–248 (SKGSSLSSESS) shows a compositional bias: low complexity. Residues 397–413 (LQEPRSKEGSDYFDSRS) are compositionally biased toward basic and acidic residues. The PH 1 domain occupies 506–620 (VVRKAGWLFF…WVTAVHSACA (115 aa)). Positions 628–695 (GKEDTLRLLK…KFHMDLFRMR (68 aa)) form a coiled coil. Residues 810–881 (IQTYVHFQDN…YMQQQVYDEI (72 aa)) enclose the RBD domain. Residues 890–976 (DVQLTKTGSV…GLTLIARPPD (87 aa)) form the PDZ domain. Residues 1070-1092 (DSQANGMEGPRENQDPPPRSLAR) are disordered. The region spanning 1099 to 1293 (RLRKVIQELV…EKVASHINEM (195 aa)) is the DH domain. One can recognise a PH 2 domain in the interval 1347-1478 (DLELTVFVFK…EKTCKDRLVP (132 aa)). Disordered regions lie at residues 1500 to 1556 (NSSS…GLAD) and 1568 to 1628 (LSDE…PKLV). Residues 1513 to 1527 (GTLLDSDEGSLSSGT) show a composition bias toward low complexity. Phosphoserine is present on Ser1583. Residues 1596–1607 (RISEDPDVHPEA) show a composition bias toward basic and acidic residues. Position 1648 is a phosphothreonine (Thr1648).

Belongs to the TIAM family. In terms of assembly, interacts with MAP1A, MAP1B, PARP1 and YWHAE. Interacts with CD44, PARD3 and MAPK8IP2. In terms of processing, phosphorylated on serine and threonine residues. Phosphorylated on Thr-1648 by Rho-kinase. Its phosphorylation by Rho-kinase inhibits its guanine nucleotide exchange activity, its interaction with MAP1A, MAP1B, PARP1 and YWHAE and reduces its ability to promote neurite growth. Expressed in the occipital, frontal and temporal lobes, cerebellum, putamen and testis.

It is found in the cytoplasm. The protein resides in the cell projection. The protein localises to the lamellipodium. It localises to the filopodium. Its subcellular location is the growth cone. It is found in the neuron projection. The protein resides in the perikaryon. Functionally, modulates the activity of RHO-like proteins and connects extracellular signals to cytoskeletal activities. Acts as a GDP-dissociation stimulator protein that stimulates the GDP-GTP exchange activity of RHO-like GTPases and activates them. Mediates extracellular laminin signals to activate Rac1, contributing to neurite growth. Involved in lamellipodial formation and advancement of the growth cone of embryonic hippocampal neurons. Promotes migration of neurons in the cerebral cortex. When overexpressed, induces membrane ruffling accompanied by the accumulation of actin filaments along the altered plasma membrane. Activates specifically RAC1, but not CDC42 and RHOA. The polypeptide is Rho guanine nucleotide exchange factor TIAM2 (TIAM2) (Homo sapiens (Human)).